We begin with the raw amino-acid sequence, 747 residues long: AMP deaminase 1 (747 aa).

Threonine 81 is modified (phosphothreonine). Serine 85 is modified (phosphoserine). Tyrosine 216 is subject to Phosphotyrosine. Histidine 303 and histidine 305 together coordinate Zn(2+). Substrate-binding positions include histidine 305 and 374-379 (KFNDKY). Position 441 is a phosphoserine (serine 441). Histidine 572 contributes to the Zn(2+) binding site. Glutamate 575 serves as a coordination point for substrate. Histidine 594 functions as the Proton acceptor in the catalytic mechanism. Position 649 (aspartate 649) interacts with Zn(2+). Position 650 to 653 (650 to 653 (DPMQ)) interacts with substrate.

The protein belongs to the metallo-dependent hydrolases superfamily. Adenosine and AMP deaminases family. As to quaternary structure, homotetramer. Zn(2+) is required as a cofactor.

The catalysed reaction is AMP + H2O + H(+) = IMP + NH4(+). It functions in the pathway purine metabolism; IMP biosynthesis via salvage pathway; IMP from AMP: step 1/1. In terms of biological role, AMP deaminase plays a critical role in energy metabolism. The sequence is that of AMP deaminase 1 from Homo sapiens (Human).